The following is a 707-amino-acid chain: Ribosome biogenesis protein ENP2 (707 aa).

WD repeat units lie at residues 54-94, 178-217, 226-265, 269-310, and 312-351; these read EFSE…LKFD, LDTE…RVSK, NRPF…PSII, GYGF…AYAS, and EPSV…PSPR. The segment at 523–707 is disordered; sequence LTAAEESDEE…RASKNAFRGM (185 aa). Serine 529 bears the Phosphoserine mark. Positions 532–544 are enriched in basic and acidic residues; sequence ERIAMKDGRGHYD. The span at 545-558 shows a compositional bias: acidic residues; that stretch reads YEDEESDEEESDDE. A phosphoserine mark is found at serine 550 and serine 555. Basic and acidic residues-rich tracts occupy residues 559 to 598, 629 to 647, 659 to 671, and 680 to 697; these read TNQK…RFMN, ENGK…RGEA, KDGN…HDNS, and NGNK…ENRR.

Belongs to the WD repeat NOL10/ENP2 family. Component of the 90S pre-ribosomes.

Its subcellular location is the nucleus. It localises to the nucleolus. May be involved in rRNA-processing and ribosome biosynthesis. The sequence is that of Ribosome biogenesis protein ENP2 (ENP2) from Saccharomyces cerevisiae (strain ATCC 204508 / S288c) (Baker's yeast).